The chain runs to 274 residues: tRNA pseudouridine synthase A (274 aa).

Catalysis depends on Asp54, which acts as the Nucleophile. Residue Tyr112 coordinates substrate.

The protein belongs to the tRNA pseudouridine synthase TruA family. As to quaternary structure, homodimer.

The catalysed reaction is uridine(38/39/40) in tRNA = pseudouridine(38/39/40) in tRNA. Its function is as follows. Formation of pseudouridine at positions 38, 39 and 40 in the anticodon stem and loop of transfer RNAs. This Solidesulfovibrio magneticus (strain ATCC 700980 / DSM 13731 / RS-1) (Desulfovibrio magneticus) protein is tRNA pseudouridine synthase A.